The sequence spans 270 residues: 3-methyl-2-oxobutanoate hydroxymethyltransferase (270 aa).

Asp43 and Asp82 together coordinate Mg(2+). Residues 43-44, Asp82, and Lys110 contribute to the 3-methyl-2-oxobutanoate site; that span reads DS. Position 112 (Glu112) interacts with Mg(2+). The active-site Proton acceptor is Glu179.

The protein belongs to the PanB family. In terms of assembly, homodecamer; pentamer of dimers. Mg(2+) is required as a cofactor.

It localises to the cytoplasm. The catalysed reaction is 3-methyl-2-oxobutanoate + (6R)-5,10-methylene-5,6,7,8-tetrahydrofolate + H2O = 2-dehydropantoate + (6S)-5,6,7,8-tetrahydrofolate. It participates in cofactor biosynthesis; (R)-pantothenate biosynthesis; (R)-pantoate from 3-methyl-2-oxobutanoate: step 1/2. Its function is as follows. Catalyzes the reversible reaction in which hydroxymethyl group from 5,10-methylenetetrahydrofolate is transferred onto alpha-ketoisovalerate to form ketopantoate. This is 3-methyl-2-oxobutanoate hydroxymethyltransferase from Psychrobacter sp. (strain PRwf-1).